Consider the following 223-residue polypeptide: Cytidylate kinase (223 aa).

10-18 (GPASSGKST) lines the ATP pocket.

The protein belongs to the cytidylate kinase family. Type 1 subfamily.

Its subcellular location is the cytoplasm. The catalysed reaction is CMP + ATP = CDP + ADP. It catalyses the reaction dCMP + ATP = dCDP + ADP. This chain is Cytidylate kinase, found in Streptococcus pneumoniae serotype 4 (strain ATCC BAA-334 / TIGR4).